A 273-amino-acid chain; its full sequence is Tyrosinase (273 aa).

Positions 38, 54, 63, 190, 194, and 216 each coordinate Cu cation.

Belongs to the tyrosinase family. Requires Cu(2+) as cofactor.

It catalyses the reaction 2 L-dopa + O2 = 2 L-dopaquinone + 2 H2O. The enzyme catalyses L-tyrosine + O2 = L-dopaquinone + H2O. This is a copper-containing oxidase that functions in the formation of pigments such as melanins and other polyphenolic compounds. The sequence is that of Tyrosinase (melC2) from Streptomyces antibioticus.